The sequence spans 1134 residues: Early transcription factor large subunit homolog (1134 aa).

Residues 52–352 (KGGRAFFPCD…PNGQPLQRQQ (301 aa)) form the Helicase ATP-binding domain. Position 99-106 (99-106 (WQTGTGKS)) interacts with ATP. The DEAH box signature appears at 281 to 284 (DEIH). Positions 524–725 (MMKDILSIIR…EGDKALRKHA (202 aa)) constitute a Helicase C-terminal domain.

The protein belongs to the DEAD box helicase family. DEAH subfamily.

It is found in the virion. It carries out the reaction ATP + H2O = ADP + phosphate + H(+). Putative initation factor. This is Early transcription factor large subunit homolog from African swine fever virus (isolate Pig/Kenya/KEN-50/1950) (ASFV).